The primary structure comprises 202 residues: Dephospho-CoA kinase (202 aa).

One can recognise a DPCK domain in the interval Val4–Asn201. Ala12–Thr17 is an ATP binding site.

The protein belongs to the CoaE family.

Its subcellular location is the cytoplasm. It carries out the reaction 3'-dephospho-CoA + ATP = ADP + CoA + H(+). The protein operates within cofactor biosynthesis; coenzyme A biosynthesis; CoA from (R)-pantothenate: step 5/5. Functionally, catalyzes the phosphorylation of the 3'-hydroxyl group of dephosphocoenzyme A to form coenzyme A. This chain is Dephospho-CoA kinase, found in Vibrio vulnificus (strain YJ016).